The primary structure comprises 345 residues: Ephrin-B1 (345 aa).

Positions 1–24 (MARPGQRWLSKWLVAMVVLTLCRL) are cleaved as a signal peptide. The Extracellular segment spans residues 25–236 (ATPLAKNLEP…GDSDSFFNSK (212 aa)). The Ephrin RBD domain occupies 30–164 (KNLEPVSWSS…TRTMKIVMKV (135 aa)). Intrachain disulfides connect cysteine 64-cysteine 101 and cysteine 89-cysteine 153. Residue asparagine 139 is glycosylated (N-linked (GlcNAc...) asparagine). The disordered stretch occupies residues 169–227 (NAVTPEQLTTSRPSKESDNTVKTATQAPGRGSQGDSDGKHETVNQEEKSGPGAGGGGSG). Residues 204-217 (SDGKHETVNQEEKS) are compositionally biased toward basic and acidic residues. The chain crosses the membrane as a helical span at residues 237–257 (VALFAAVGAGCVIFLLIIIFL). Residues 258-345 (TVLLLKLRKR…QSPANIYYKV (88 aa)) lie on the Cytoplasmic side of the membrane. Positions 259 to 272 (VLLLKLRKRHRKHT) match the Nuclear localization signal motif. The tract at residues 262 to 293 (LKLRKRHRKHTQQRAAALSLSTLASPKGGSGT) is interaction with ZHX2. A phosphoserine mark is found at serine 280 and serine 286. Residues 343 to 345 (YKV) carry the PDZ-binding motif.

It belongs to the ephrin family. Interacts (via PDZ-binding motif) with GRIP1 and GRIP2 (via PDZ domain 6). Interacts with TLE1. The intracellular domain peptide interacts with ZHX2; the interaction enhances ZHX2 transcriptional repression activity. In terms of processing, inducible phosphorylation of tyrosine residues in the cytoplasmic domain. Proteolytically processed. The ectodomain is cleaved, probably by a metalloprotease, to produce a membrane-tethered C-terminal fragment. This fragment is then further processed by the gamma-secretase complex to yield a soluble intracellular domain peptide which can translocate to the nucleus. The intracellular domain peptide is highly labile suggesting that it is targeted for degradation by the proteasome. Expressed on lateral floor plate cells, specifically on commissural axon segments that have passed through the floor plate. Expressed in cells of the retinal ganglion cell layer during retinal axon guidance to the optic disk. Expressed in myogenic progenitor cells.

The protein localises to the cell membrane. Its subcellular location is the membrane raft. It is found in the nucleus. Functionally, cell surface transmembrane ligand for Eph receptors, a family of receptor tyrosine kinases which are crucial for migration, repulsion and adhesion during neuronal, vascular and epithelial development. Binding to Eph receptors residing on adjacent cells leads to contact-dependent bidirectional signaling into neighboring cells. Shows high affinity for the receptor tyrosine kinase EPHB1/ELK. Can also bind EPHB2 and EPHB3. Binds to, and induces the collapse of, commissural axons/growth cones in vitro. May play a role in constraining the orientation of longitudinally projecting axons. The polypeptide is Ephrin-B1 (Efnb1) (Mus musculus (Mouse)).